The primary structure comprises 815 residues: Heme-copper oxidase subunit I+III (815 aa).

The COX1 stretch occupies residues 1–467; sequence MVSRLRGFLA…QLSTLGAFIF (467 aa). The helical transmembrane segment at 26–46 threads the bilayer; the sequence is LLYLVTSIAFLLIAGSLALLF. Residue H70 participates in Fe(II)-heme a binding. 18 consecutive transmembrane segments (helical) span residues 71-91, 105-125, 157-177, 197-217, 242-262, 281-301, 314-334, 339-359, 380-400, 419-439, 463-483, 580-600, 637-657, 683-703, 708-728, 736-756, 758-778, and 791-811; these read GLIM…NYIV, LNAL…ASFF, LAIF…LVTI, ILFT…GGAL, LFWF…LGAM, LTAF…HMFI, ITTI…IFTL, LVYT…IIGG, VVAH…IAGL, IHFA…FALM, GAFI…YSLV, ALFG…VFLL, WVFI…YFFI, LINT…YLGV, YLIT…FLTV, LLIA…YVTT, AHAL…VKLF, and VLAV…VFPL. Residues H248, Y252, H297, and H298 each contribute to the Cu cation site. The segment at residues 248–252 is a cross-link (1'-histidyl-3'-tyrosine (His-Tyr)); that stretch reads HPEVY. H383 contacts heme a3. Fe(II)-heme a is bound at residue H385. A COX3 region spans residues 545–815; that stretch reads DVSNVPLSGG…TLVFPLYYLV (271 aa).

In the N-terminal section; belongs to the heme-copper respiratory oxidase family. It in the C-terminal section; belongs to the cytochrome c oxidase subunit 3 family. The cofactor is heme. Requires Cu cation as cofactor.

It localises to the cell membrane. In Aeropyrum pernix (strain ATCC 700893 / DSM 11879 / JCM 9820 / NBRC 100138 / K1), this protein is Heme-copper oxidase subunit I+III (aoxB).